We begin with the raw amino-acid sequence, 46 residues long: Large ribosomal subunit protein bL34c (46 aa).

Belongs to the bacterial ribosomal protein bL34 family.

It localises to the plastid. It is found in the chloroplast. This chain is Large ribosomal subunit protein bL34c (rpl34), found in Guillardia theta (Cryptophyte).